The following is a 216-amino-acid chain: V-type ATP synthase subunit D (216 aa).

The protein belongs to the V-ATPase D subunit family.

In terms of biological role, produces ATP from ADP in the presence of a proton gradient across the membrane. In Clostridium botulinum (strain ATCC 19397 / Type A), this protein is V-type ATP synthase subunit D.